Here is a 101-residue protein sequence, read N- to C-terminus: Co-chaperonin GroES 1 (101 aa).

Belongs to the GroES chaperonin family. Heptamer of 7 subunits arranged in a ring. Interacts with the chaperonin GroEL.

The protein localises to the cytoplasm. In terms of biological role, together with the chaperonin GroEL, plays an essential role in assisting protein folding. The GroEL-GroES system forms a nano-cage that allows encapsulation of the non-native substrate proteins and provides a physical environment optimized to promote and accelerate protein folding. GroES binds to the apical surface of the GroEL ring, thereby capping the opening of the GroEL channel. In Rhodopirellula baltica (strain DSM 10527 / NCIMB 13988 / SH1), this protein is Co-chaperonin GroES 1.